We begin with the raw amino-acid sequence, 577 residues long: Adenine deaminase (577 aa).

It belongs to the metallo-dependent hydrolases superfamily. Adenine deaminase family. Mn(2+) is required as a cofactor.

The enzyme catalyses adenine + H2O + H(+) = hypoxanthine + NH4(+). This is Adenine deaminase from Kosmotoga olearia (strain ATCC BAA-1733 / DSM 21960 / TBF 19.5.1).